Consider the following 257-residue polypeptide: Type III pantothenate kinase (257 aa).

5-12 (DIGNTNIK) contacts ATP. Substrate is bound at residue 107-110 (GSDR). Aspartate 109 (proton acceptor) is an active-site residue. Threonine 133 contributes to the ATP binding site.

This sequence belongs to the type III pantothenate kinase family. Homodimer. Requires NH4(+) as cofactor. K(+) serves as cofactor.

Its subcellular location is the cytoplasm. It catalyses the reaction (R)-pantothenate + ATP = (R)-4'-phosphopantothenate + ADP + H(+). Its pathway is cofactor biosynthesis; coenzyme A biosynthesis; CoA from (R)-pantothenate: step 1/5. In terms of biological role, catalyzes the phosphorylation of pantothenate (Pan), the first step in CoA biosynthesis. The chain is Type III pantothenate kinase from Ehrlichia ruminantium (strain Welgevonden).